The chain runs to 106 residues: UPF0145 protein PFL_3418 (106 aa).

It belongs to the UPF0145 family.

This is UPF0145 protein PFL_3418 from Pseudomonas fluorescens (strain ATCC BAA-477 / NRRL B-23932 / Pf-5).